Reading from the N-terminus, the 495-residue chain is L-arabinose isomerase (495 aa).

The Mn(2+) site is built by glutamate 305, glutamate 332, histidine 349, and histidine 448.

Belongs to the arabinose isomerase family. Mn(2+) is required as a cofactor.

It catalyses the reaction beta-L-arabinopyranose = L-ribulose. Its pathway is carbohydrate degradation; L-arabinose degradation via L-ribulose; D-xylulose 5-phosphate from L-arabinose (bacterial route): step 1/3. Catalyzes the conversion of L-arabinose to L-ribulose. The polypeptide is L-arabinose isomerase (Mannheimia succiniciproducens (strain KCTC 0769BP / MBEL55E)).